The following is a 1497-amino-acid chain: Polyunsaturated fatty acid synthase subunit C (1497 aa).

Dehydratase (DH) domain stretches follow at residues 271 to 422 (YKLC…DYGK) and 797 to 937 (QGQY…RVRI). The span at 944–958 (ASSSASSVGSSASAE) shows a compositional bias: low complexity. Residues 944–977 (ASSSASSVGSSASAEVAERTRSKAAPQPVASGPA) form a disordered region. The segment at 1026–1470 (LGDLGDRSFM…ILRGACYLRR (445 aa)) is enoylreductase (ER) domain.

The protein belongs to the thioester dehydratase family. FabA subfamily. Component of the polyunsaturated fatty acid synthase complex composed of at least ORF-A, ORF-B and ORF-C.

It participates in lipid metabolism; fatty acid biosynthesis. Its function is as follows. Polyketide synthase-like protein; part of the polyunsaturated fatty acid synthase composed of the 3 PKS-like subunits A, B and C. While the saturated fatty acids (SFAs) in Thraustochytrium are produced by the conventional fatty acid synthase (FAS) pathway, polyunsaturated fatty acids (PUFAs) including docosahexeanoic acid (DHA) and docosapentaenoic acid (DPA) are synthesized via an anaerobical PKS pathway. PUFA synthase assimilates fatty acyl-CoA, the product of FAS, as the starter unit to synthesize DPA, and this starter unit may be butyryl-CoA, hexanoyl-CoA, or octanoyl-CoA. DPA and DHA biosynthesis seem to differ by the reduction at the N-3 position by PUFA synthase, not the extension of carbon chain. In DHA biosynthesis, PUFA synthase extends the fatty acyl chain from the methyl toward the carboxyl end, and the double bond is formed when the carbon chain is growing, instead of afterward. Therefore, PUFA synthase is unable to transform DPA to DHA, suggesting that DPA is not the precursor of DHA. Moreover, DPA molecule is partly extended by FAS KS domain, so DPA biosynthesis is less dependent on PUFA synthase KS domain than DHA. The sequence is that of Polyunsaturated fatty acid synthase subunit C from Thraustochytrium sp. (strain ATCC 26185 / S-3).